Consider the following 341-residue polypeptide: Phosphoribosylformylglycinamidine cyclo-ligase (341 aa).

It belongs to the AIR synthase family.

It localises to the cytoplasm. It carries out the reaction 2-formamido-N(1)-(5-O-phospho-beta-D-ribosyl)acetamidine + ATP = 5-amino-1-(5-phospho-beta-D-ribosyl)imidazole + ADP + phosphate + H(+). It participates in purine metabolism; IMP biosynthesis via de novo pathway; 5-amino-1-(5-phospho-D-ribosyl)imidazole from N(2)-formyl-N(1)-(5-phospho-D-ribosyl)glycinamide: step 2/2. This is Phosphoribosylformylglycinamidine cyclo-ligase from Synechococcus elongatus (strain ATCC 33912 / PCC 7942 / FACHB-805) (Anacystis nidulans R2).